The following is a 273-amino-acid chain: Putative pyruvate, phosphate dikinase regulatory protein (273 aa).

Residue 151–158 (GVSRTSKT) coordinates ADP.

This sequence belongs to the pyruvate, phosphate/water dikinase regulatory protein family. PDRP subfamily.

It carries out the reaction N(tele)-phospho-L-histidyl/L-threonyl-[pyruvate, phosphate dikinase] + ADP = N(tele)-phospho-L-histidyl/O-phospho-L-threonyl-[pyruvate, phosphate dikinase] + AMP + H(+). The enzyme catalyses N(tele)-phospho-L-histidyl/O-phospho-L-threonyl-[pyruvate, phosphate dikinase] + phosphate + H(+) = N(tele)-phospho-L-histidyl/L-threonyl-[pyruvate, phosphate dikinase] + diphosphate. Bifunctional serine/threonine kinase and phosphorylase involved in the regulation of the pyruvate, phosphate dikinase (PPDK) by catalyzing its phosphorylation/dephosphorylation. The protein is Putative pyruvate, phosphate dikinase regulatory protein of Desulfitobacterium hafniense (strain DSM 10664 / DCB-2).